A 1074-amino-acid polypeptide reads, in one-letter code: Transmembrane protein 132E (1074 aa).

An N-terminal signal peptide occupies residues 1–23; that stretch reads MAPGMSGRRGAALLCLSVLLAHA. The Extracellular segment spans residues 26 to 894; the sequence is RSHPASPSPP…LTDLEIGMYA (869 aa). N-linked (GlcNAc...) asparagine glycans are attached at residues N70 and N91. Disordered stretches follow at residues 205-224 and 243-266; these read PAAP…PEAA and GGCG…ESPT. The segment covering 247–262 has biased composition (low complexity); it reads SARRGPGPGPGAAARA. N320 and N401 each carry an N-linked (GlcNAc...) asparagine glycan. Disordered stretches follow at residues 564–587 and 816–867; these read RRSA…ANRG and GRDE…PVPP. A compositionally biased stretch (low complexity) spans 843–854; it reads GAGPPGTAIPAG. The chain crosses the membrane as a helical span at residues 895 to 915; it reads LLGVFCLAILVFLINCIVFVL. At 916 to 1074 the chain is on the cytoplasmic side; that stretch reads RYRHKRIPPE…NYMRRIKDIA (159 aa). Positions 962-1064 are disordered; it reads VPACCHGDHH…TRPTPPPDLH (103 aa). Composition is skewed to low complexity over residues 973–985 and 1016–1026; these read SGSS…SQVH and FTTFTTLPTEE. Residues 1035–1044 show a composition bias toward acidic residues; the sequence is GEEEDEEEDL.

Belongs to the TMEM132 family. In terms of tissue distribution, widely expressed, with highest levels in the cochlea. In the cochlea, detected in spiral ganglion, the organ of Corti and stria vascularis. In the organ of Corti, prominently expressed in the outer and inner hair cells, especially at the apical and basal region of the outer hair cell body (at protein level).

The protein localises to the membrane. In terms of biological role, required for normal inner ear hair cell function and hearing. In Mus musculus (Mouse), this protein is Transmembrane protein 132E (Tmem132e).